The chain runs to 535 residues: Probable glucomannan 4-beta-mannosyltransferase 14 (535 aa).

The helical transmembrane segment at 42–62 (QVVSVLLFVDAAYMAIVVAIV) threads the bilayer. Asp131 is an active-site residue. The substrate site is built by Asp193 and Asp195. Asp287 is an active-site residue. Transmembrane regions (helical) follow at residues 366–386 (IVVHIFTFVFYCVILPATVIF), 403–423 (ITILNAIATPKSFYLILYWIL), 482–502 (IMVGMYLFICGYYDFVFGRTY), and 503–523 (LYVYLFLQSIAFFVVGVGYVG).

The protein belongs to the glycosyltransferase 2 family. Plant cellulose synthase-like A subfamily.

Its subcellular location is the golgi apparatus membrane. The catalysed reaction is GDP-mannose + (glucomannan)n = GDP + (glucomannan)n+1.. In terms of biological role, probable mannan synthase which consists of a 4-beta-mannosyltransferase activity on mannan using GDP-mannose. The beta-1,4-mannan product is the backbone for galactomannan synthesis by galactomannan galactosyltransferase. Galactomannan is a noncellulosic polysaccharides of plant cell wall. In Arabidopsis thaliana (Mouse-ear cress), this protein is Probable glucomannan 4-beta-mannosyltransferase 14.